Here is a 743-residue protein sequence, read N- to C-terminus: Putative cation exchanger C3A12.06c (743 aa).

Transmembrane regions (helical) follow at residues 13 to 33 (LILLWCILGIAYILFWTHRIS), 109 to 129 (FPVLSIIVGWLIFLFITIGIS), 138 to 158 (LVTISWLLQLPDSVVGVTFLA), 182 to 202 (IGELLGSAFFIVAIVAGSVCL), 213 to 233 (FLRDVAFLTGTILLVIMFVLH), 239 to 258 (IWQSLVMILYYLLYVLFVFF), 528 to 548 (LRLLQCVFVPFAFVTFSITGG), 551 to 571 (LYIYAASSVFSILCITALYYY), 580 to 600 (FLPWVSFIGFVLGIIWISTIA), 609 to 629 (ALGVIFNLNESILGLTVFAAG), 649 to 669 (MAMGGVFGGPTLNILIGIGIS), 690 to 710 (LSITAYFLLACLLLLLIYVPL), and 718 to 738 (VLGLLLFILYIVGTSTNIVVE).

This sequence belongs to the Ca(2+):cation antiporter (CaCA) (TC 2.A.19) family.

The protein localises to the endoplasmic reticulum membrane. Its function is as follows. Putative cation exchanger. This Schizosaccharomyces pombe (strain 972 / ATCC 24843) (Fission yeast) protein is Putative cation exchanger C3A12.06c.